The chain runs to 70 residues: Small ribosomal subunit protein bS21 (70 aa).

It belongs to the bacterial ribosomal protein bS21 family.

The sequence is that of Small ribosomal subunit protein bS21 from Bordetella avium (strain 197N).